A 69-amino-acid polypeptide reads, in one-letter code: MKAIISLLLISAMVFSMIEAVPVEEGLQLFEGERGCLPHNRFCNALSGPRCCSGLKCKELSIWDSRCLG.

A signal peptide spans 1–20; that stretch reads MKAIISLLLISAMVFSMIEA. A propeptide spanning residues 21 to 34 is cleaved from the precursor; it reads VPVEEGLQLFEGER. Intrachain disulfides connect C36–C52, C43–C57, and C51–C67. L68 carries the post-translational modification Leucine amide.

Belongs to the neurotoxin 01 (U2-agtx) family. In terms of tissue distribution, expressed by the venom gland.

The protein localises to the secreted. Insect active toxin causing rapid but reversible paralysis in crickets. No activity shown in mammals. Does not show effect on mammalian voltage-gated calcium channels. The polypeptide is U2-agatoxin-Ao1c (Agelena orientalis (Funnel-web spider)).